The sequence spans 259 residues: tRNA (guanine-N(7)-)-methyltransferase (259 aa).

The interval 1–36 (MTFPSHNPPETGHPSAAPDEALPAAEAPVPGDPEAR) is disordered. Positions 14-29 (PSAAPDEALPAAEAPV) are enriched in low complexity. Positions 91, 116, 143, and 166 each coordinate S-adenosyl-L-methionine. Asp166 is an active-site residue. Substrate-binding positions include Lys170, Asp202, and 237–240 (TKFE).

The protein belongs to the class I-like SAM-binding methyltransferase superfamily. TrmB family.

It catalyses the reaction guanosine(46) in tRNA + S-adenosyl-L-methionine = N(7)-methylguanosine(46) in tRNA + S-adenosyl-L-homocysteine. It functions in the pathway tRNA modification; N(7)-methylguanine-tRNA biosynthesis. Catalyzes the formation of N(7)-methylguanine at position 46 (m7G46) in tRNA. The polypeptide is tRNA (guanine-N(7)-)-methyltransferase (Aromatoleum aromaticum (strain DSM 19018 / LMG 30748 / EbN1) (Azoarcus sp. (strain EbN1))).